We begin with the raw amino-acid sequence, 331 residues long: Protein RecA (331 aa).

ATP is bound at residue 61–68 (GPESSGKT).

Belongs to the RecA family.

Its subcellular location is the cytoplasm. Functionally, can catalyze the hydrolysis of ATP in the presence of single-stranded DNA, the ATP-dependent uptake of single-stranded DNA by duplex DNA, and the ATP-dependent hybridization of homologous single-stranded DNAs. It interacts with LexA causing its activation and leading to its autocatalytic cleavage. The chain is Protein RecA from Mycoplasma mobile (strain ATCC 43663 / 163K / NCTC 11711) (Mesomycoplasma mobile).